The sequence spans 285 residues: Aspartate/glutamate leucyltransferase (285 aa).

Belongs to the R-transferase family. Bpt subfamily.

It localises to the cytoplasm. It catalyses the reaction N-terminal L-glutamyl-[protein] + L-leucyl-tRNA(Leu) = N-terminal L-leucyl-L-glutamyl-[protein] + tRNA(Leu) + H(+). The enzyme catalyses N-terminal L-aspartyl-[protein] + L-leucyl-tRNA(Leu) = N-terminal L-leucyl-L-aspartyl-[protein] + tRNA(Leu) + H(+). Functions in the N-end rule pathway of protein degradation where it conjugates Leu from its aminoacyl-tRNA to the N-termini of proteins containing an N-terminal aspartate or glutamate. This chain is Aspartate/glutamate leucyltransferase, found in Dinoroseobacter shibae (strain DSM 16493 / NCIMB 14021 / DFL 12).